Consider the following 316-residue polypeptide: L-lactate dehydrogenase 3 (316 aa).

Positions 16, 37, 42, and 68 each coordinate NAD(+). Arg91 is a substrate binding site. Residues Ser104, 121 to 123 (ASN), and Thr146 contribute to the NAD(+) site. 123–126 (NPVD) provides a ligand contact to substrate. 151-154 (DSSR) provides a ligand contact to substrate. 2 residues coordinate beta-D-fructose 1,6-bisphosphate: Arg156 and His171. His178 (proton acceptor) is an active-site residue. Thr233 lines the substrate pocket.

This sequence belongs to the LDH/MDH superfamily. LDH family. As to quaternary structure, homotetramer.

The protein resides in the cytoplasm. It catalyses the reaction (S)-lactate + NAD(+) = pyruvate + NADH + H(+). The protein operates within fermentation; pyruvate fermentation to lactate; (S)-lactate from pyruvate: step 1/1. Its activity is regulated as follows. Allosterically activated by fructose 1,6-bisphosphate (FBP). Its function is as follows. Catalyzes the conversion of lactate to pyruvate. This is L-lactate dehydrogenase 3 from Bacillus cereus (strain ATCC 14579 / DSM 31 / CCUG 7414 / JCM 2152 / NBRC 15305 / NCIMB 9373 / NCTC 2599 / NRRL B-3711).